An 88-amino-acid polypeptide reads, in one-letter code: MVPRCQIDVLYFAKSAEIAGVRSETISVPQEIKASELWKELEMLHPGLADVRNQVIFAVRQEYVELGDQQLLLQPGDEVAIIPPISGG.

The residue at position 88 (glycine 88) is a 1-thioglycine; alternate. Glycine 88 carries the glycyl adenylate; alternate modification.

Belongs to the MoaD family. MOCS2A subfamily. In terms of assembly, heterotetramer; composed of 2 small (MOCS2A) and 2 large (MOCS2B) subunits. C-terminal thiocarboxylation occurs in 2 steps, it is first acyl-adenylated (-COAMP) via the hesA/moeB/thiF part of MOCS3, then thiocarboxylated (-COSH) via the rhodanese domain of MOCS3.

The protein resides in the cytoplasm. Its subcellular location is the cytosol. The protein operates within cofactor biosynthesis; molybdopterin biosynthesis. Functionally, acts as a sulfur carrier required for molybdopterin biosynthesis. Component of the molybdopterin synthase complex that catalyzes the conversion of precursor Z into molybdopterin by mediating the incorporation of 2 sulfur atoms into precursor Z to generate a dithiolene group. In the complex, serves as sulfur donor by being thiocarboxylated (-COSH) at its C-terminus by MOCS3. After interaction with MOCS2B, the sulfur is then transferred to precursor Z to form molybdopterin. The polypeptide is Molybdopterin synthase sulfur carrier subunit (Mus musculus (Mouse)).